We begin with the raw amino-acid sequence, 385 residues long: Putative non-inhibitory serpin-Z11 (385 aa).

The RCL stretch occupies residues 324-348 (GTTAVEAMYSPSSPGYSPGYQPPRP).

This sequence belongs to the serpin family.

The protein is Putative non-inhibitory serpin-Z11 of Oryza sativa subsp. japonica (Rice).